Consider the following 81-residue polypeptide: Ferredoxin (81 aa).

One can recognise a 4Fe-4S ferredoxin-type domain in the interval 2-30 (KYTIVDKETCIACGACGAAAPDIYDYDED). Positions 11, 14, 17, and 61 each coordinate [4Fe-4S] cluster.

[4Fe-4S] cluster serves as cofactor.

Its function is as follows. Ferredoxins are iron-sulfur proteins that transfer electrons in a wide variety of metabolic reactions. The polypeptide is Ferredoxin (Bacillus thermoproteolyticus).